The chain runs to 248 residues: 14-3-3 protein homolog 2 (248 aa).

The protein belongs to the 14-3-3 family.

The protein is 14-3-3 protein homolog 2 of Echinococcus granulosus (Hydatid tapeworm).